The primary structure comprises 338 residues: Phosphonates-binding periplasmic protein (338 aa).

Positions 1-26 are cleaved as a signal peptide; sequence MNAKIIASLAFTSMFSLSTLLSPAHA.

The protein belongs to the phosphate/phosphite/phosphonate binding protein family. As to quaternary structure, the complex is composed of two ATP-binding proteins (PhnC), two transmembrane proteins (PhnE) and a solute-binding protein (PhnD).

The protein localises to the periplasm. Its function is as follows. Phosphonate binding protein that is part of the phosphonate uptake system. Exhibits high affinity for 2-aminoethylphosphonate, and somewhat less affinity to ethylphosphonate, methylphosphonate, phosphonoacetate and phenylphosphonate. This chain is Phosphonates-binding periplasmic protein (phnD), found in Escherichia coli (strain K12).